Reading from the N-terminus, the 234-residue chain is 2,3-bisphosphoglycerate-dependent phosphoglycerate mutase (234 aa).

Residues 8 to 15 (RHGESVWN), 21 to 22 (TG), Arg60, 87 to 90 (ERHY), Lys98, 114 to 115 (RR), and 183 to 184 (GN) each bind substrate. His9 functions as the Tele-phosphohistidine intermediate in the catalytic mechanism. Glu87 serves as the catalytic Proton donor/acceptor.

Belongs to the phosphoglycerate mutase family. BPG-dependent PGAM subfamily. As to quaternary structure, homodimer.

The catalysed reaction is (2R)-2-phosphoglycerate = (2R)-3-phosphoglycerate. It functions in the pathway carbohydrate degradation; glycolysis; pyruvate from D-glyceraldehyde 3-phosphate: step 3/5. In terms of biological role, catalyzes the interconversion of 2-phosphoglycerate and 3-phosphoglycerate. The protein is 2,3-bisphosphoglycerate-dependent phosphoglycerate mutase of Citrifermentans bemidjiense (strain ATCC BAA-1014 / DSM 16622 / JCM 12645 / Bem) (Geobacter bemidjiensis).